The following is a 920-amino-acid chain: Periplasmic nitrate reductase (920 aa).

The tat-type signal signal peptide spans 1-29 (MNRRDFIKSTAAAAACASAGIALPANLNA). Positions 35–91 (WRWDKAVCRFCGTGCGIMVATKNGKIVAVKGDPEAPVNRGLNCIKGYFNAKIMYGDD) constitute a 4Fe-4S Mo/W bis-MGD-type domain. 4 residues coordinate [4Fe-4S] cluster: C42, C45, C49, and C77. Mo-bis(molybdopterin guanine dinucleotide) contacts are provided by residues K79, Q147, N172, C176, 209-216 (WGANMAEM), M416, Q420, N526, 551-552 (SD), K574, D601, and 810-819 (TGRVLEHWHS). W886 is a binding site for substrate. Mo-bis(molybdopterin guanine dinucleotide)-binding residues include N894 and K911.

This sequence belongs to the prokaryotic molybdopterin-containing oxidoreductase family. NasA/NapA/NarB subfamily. As to quaternary structure, component of the periplasmic nitrate reductase NapAB complex composed of NapA and NapB. [4Fe-4S] cluster serves as cofactor. Mo-bis(molybdopterin guanine dinucleotide) is required as a cofactor. In terms of processing, predicted to be exported by the Tat system. The position of the signal peptide cleavage has not been experimentally proven.

The protein localises to the periplasm. It catalyses the reaction 2 Fe(II)-[cytochrome] + nitrate + 2 H(+) = 2 Fe(III)-[cytochrome] + nitrite + H2O. Functionally, catalytic subunit of the periplasmic nitrate reductase complex NapAB. Receives electrons from NapB and catalyzes the reduction of nitrate to nitrite. The chain is Periplasmic nitrate reductase from Campylobacter hominis (strain ATCC BAA-381 / DSM 21671 / CCUG 45161 / LMG 19568 / NCTC 13146 / CH001A).